The sequence spans 327 residues: tRNA uridine(34) hydroxylase (327 aa).

The 95-residue stretch at 130–224 (LDEDTVVLDT…YGKDPEVQGE (95 aa)) folds into the Rhodanese domain. Catalysis depends on C184, which acts as the Cysteine persulfide intermediate.

It belongs to the TrhO family.

The catalysed reaction is uridine(34) in tRNA + AH2 + O2 = 5-hydroxyuridine(34) in tRNA + A + H2O. In terms of biological role, catalyzes oxygen-dependent 5-hydroxyuridine (ho5U) modification at position 34 in tRNAs. This Streptococcus thermophilus (strain ATCC BAA-250 / LMG 18311) protein is tRNA uridine(34) hydroxylase.